The chain runs to 169 residues: Ribosome maturation factor RimM (169 aa).

The PRC barrel domain occupies 94–168; it reads DDEFYHADLI…RIVADPPEGL (75 aa).

The protein belongs to the RimM family. Binds ribosomal protein uS19.

The protein resides in the cytoplasm. Functionally, an accessory protein needed during the final step in the assembly of 30S ribosomal subunit, possibly for assembly of the head region. Essential for efficient processing of 16S rRNA. May be needed both before and after RbfA during the maturation of 16S rRNA. It has affinity for free ribosomal 30S subunits but not for 70S ribosomes. This is Ribosome maturation factor RimM from Cereibacter sphaeroides (strain ATCC 17029 / ATH 2.4.9) (Rhodobacter sphaeroides).